A 160-amino-acid polypeptide reads, in one-letter code: Single-stranded DNA-binding protein (160 aa).

Its function is as follows. Binds to single-stranded DNA (ssDNA). Has a regulatory effect on phage DNA metabolism and transcription of early genes. This is Single-stranded DNA-binding protein (XII) from Enterobacteria phage PRD1 (Bacteriophage PRD1).